Consider the following 466-residue polypeptide: UDP-N-acetylmuramoylalanine--D-glutamate ligase (466 aa).

127 to 133 (GSNGKST) contacts ATP.

This sequence belongs to the MurCDEF family.

It is found in the cytoplasm. It carries out the reaction UDP-N-acetyl-alpha-D-muramoyl-L-alanine + D-glutamate + ATP = UDP-N-acetyl-alpha-D-muramoyl-L-alanyl-D-glutamate + ADP + phosphate + H(+). Its pathway is cell wall biogenesis; peptidoglycan biosynthesis. Cell wall formation. Catalyzes the addition of glutamate to the nucleotide precursor UDP-N-acetylmuramoyl-L-alanine (UMA). The protein is UDP-N-acetylmuramoylalanine--D-glutamate ligase of Ruegeria pomeroyi (strain ATCC 700808 / DSM 15171 / DSS-3) (Silicibacter pomeroyi).